The chain runs to 1775 residues: MMVFQSFILGNLVSLCMKIINSVVVVGLYYGFLTTFSIGPSYLFLLRARVMDEGEEGTEKKVSATTGFIAGQLMMFISIYYAPLHLALGRPHTITVLALPYLLFHFFWNNHKHFFDYGSTTRNEMRNLRIQCVFLNNLIFQLFNHFILPSSMLARLVNIYMFRCNNKMLFVTSSFVGWLIGHILFMKWVGLVLVWIQQNNSIRSNVLIRSNKYKFLVSELRNSMARIFSILLFITCVYYLGRIPSPIFTKKLKGTSERGGTKQDQEVSTEEAPFPSLFSEEREDLDKIDEMEQIRVNGKEKINKDDEFHVRTYYNSKTVSENRDGNKENSNLEFFKIKKKEDCFLGFAKPFVTLVFDYKRWNRPNRYIKNDKIEHTVRNEMSQYFFYTCQNDGKEQISFTYPANLSTFFEMMQKKIPPFTREKAPSDQVFTCWSLINEEKKENLQNEFFNRIETLDKEWSVENILEKTTRFCHNETKTEYLPKIYDPFLHGISRGRIKKLPPFQIITETYIKNNIGGSWINKIHGILLKINSRKFEQTLEKFNRKSLSIEEKLSCFSEPQEEQNNSEEEIKIFKFLFNVVITDNNEQTFIKNLIYFDEINKKVPRWSYKLISDLEEMEAEDEQSILAEPGIRSRKAKRIVVFTEKETHNETFKENQSSDEKEEISFIRFSQQPDFRREIIKGSMRSQRRKTVIWEFFQAKAHSPFFFDRIDKLFFFSFDSFSFDIWGLKKKILRNFMWKNKTIYKTKAEQSKIEEKKRLQIAETWDNVRFAQIIRSSVLVTQSILRKNIILPLLIIIKNSIRVLLFQIPEWSEDLKDLKREMHVKCTYNGVQLSEKEFPRKWLTDGIQIKIIFPFYLKPWHNSKFQSSQKAQRKKAKDTEKKNDFCFLTVWGRETELPFGSAKKKPSFFEPIYKELKKRIKKFKTKPFLVLRIFKEREKFFLKVAKEMKNWIIKNFLFLKGKIKNLSKRNIIPVFGPREIYEVNETKNDSIMSNQMIENLSVQKKSMEWTNSLLSENKLKNLIDRIKTIRNQTEEISKEKENLTNSCNKPRYDSKIIESSKKSWQTLKRKNTRLIRKSFFFIKFCIEQLSIAIFLGIINIPRITTQLFFESTKTILDKYIYKNEENGKKINKKKTTIYFISTIKNLLSKKKKISYDLCSLSQAYVFYKLSKMQVSNVSKLKAVLEYKICITSFFVKNKIKDFFQEQGIFDYELKDKTFVNSEVNQWKNWLRSHSQYNLPQIAWARLGTQKWKNKINQDSIVLNRSLTKEDSYEKKIFDNYKKQNFFEADSLLNPKHNVKKDYIYNLFCYKSINSTEKNLDMAIGIALDNYLVSCFLEKYNIRGRRKIGHRKYLDWRMLNFWFRKNVNSEPWVDTKSKKKYIKTQVQNYQRIEKITKTGVANEKNFFFDWMGMNEEIINNRVTNLEFFFFPEFLLFSSTYKMKPWVIPIKLLLFNFNEKKNINKKITPNKKGFIPSNAKKFLEFFNLNKEEKESAGQGERESDNEKKKNLESALSKQEKNIEENYAELKIKKHKTKKQHKSNTEVEIDSFMGRDSRFQMRWNSFFNKKIITTLKVYCFLVRLKNPNEIILSSIERGEINPDILLISKTLPFSQLLKKGMWVFEPVRLSLKNDGQLIIYRTIGISLVHKKKNKISKRYKKKSYIDKKNNCDFFVPENILSPKRRREFRILICFNLKKKNARDRNSRFDKNIPNLTTVLHKKKNLDKDKNNLIKLKSFLWPNFRLEDLACMNRYWFNTTNGNHFGMIRIHMYTRFQIH.

6 helical membrane-spanning segments follow: residues 19 to 39, 68 to 88, 91 to 111, 133 to 153, 176 to 196, and 227 to 247; these read IINS…FSIG, FIAG…HLAL, PHTI…WNNH, VFLN…SSML, VGWL…LVWI, and IFSI…PSPI. The disordered stretch occupies residues 1491–1512; sequence KESAGQGERESDNEKKKNLESA.

This sequence belongs to the TIC214 family. Part of the Tic complex.

Its subcellular location is the plastid. It is found in the chloroplast inner membrane. In terms of biological role, involved in protein precursor import into chloroplasts. May be part of an intermediate translocation complex acting as a protein-conducting channel at the inner envelope. The chain is Protein TIC 214 from Lobularia maritima (Sweet alyssum).